Here is a 171-residue protein sequence, read N- to C-terminus: 3-hydroxyanthranilate 3,4-dioxygenase (171 aa).

Arg-44 serves as a coordination point for O2. 3 residues coordinate Fe cation: His-48, Glu-54, and His-92. Glu-54 is a binding site for substrate. Substrate is bound by residues Arg-96 and Glu-106. Positions 121, 126, 160, and 163 each coordinate a divalent metal cation.

The protein belongs to the 3-HAO family. It depends on Fe(2+) as a cofactor.

It localises to the cytoplasm. It catalyses the reaction 3-hydroxyanthranilate + O2 = (2Z,4Z)-2-amino-3-carboxymuconate 6-semialdehyde. It functions in the pathway cofactor biosynthesis; NAD(+) biosynthesis; quinolinate from L-kynurenine: step 3/3. Its function is as follows. Catalyzes the oxidative ring opening of 3-hydroxyanthranilate to 2-amino-3-carboxymuconate semialdehyde, which spontaneously cyclizes to quinolinate. This chain is 3-hydroxyanthranilate 3,4-dioxygenase, found in Yarrowia lipolytica (strain CLIB 122 / E 150) (Yeast).